The sequence spans 340 residues: KH domain-containing RNA-binding protein QKI (340 aa).

The region spanning 87-153 (YVPVKEYPDF…WEHLNEDLHV (67 aa)) is the KH domain. Residues 275–278 (PPGP) carry the SH3-binding motif. Positions 323–329 (RVHPYQR) match the Nuclear localization signal motif.

Belongs to the quaking family. As to quaternary structure, homodimer; does not require RNA to homodimerize.

The protein resides in the cytoplasm. Its subcellular location is the nucleus. In terms of biological role, RNA reader protein, which recognizes and binds specific RNAs, thereby regulating RNA metabolic processes, such as pre-mRNA splicing, circular RNA (circRNA) formation, mRNA export, mRNA stability and/or translation. Involved in various cellular processes, such as mRNA storage into stress granules, apoptosis, interferon response, glial cell fate and development. Binds to the 5'-NACUAAY-N(1,20)-UAAY-3' RNA core sequence. Acts as a mRNA modification reader that specifically recognizes and binds mRNA transcripts modified by internal N(7)-methylguanine (m7G). Promotes the formation of circular RNAs (circRNAs): acts by binding to sites flanking circRNA-forming exons. CircRNAs are produced by back-splicing circularization of pre-mRNAs. Required to protect and promote stability of mRNAs which promotes oligodendrocyte differentiation. Acts as an important regulator of muscle development. The sequence is that of KH domain-containing RNA-binding protein QKI from Gallus gallus (Chicken).